The sequence spans 72 residues: UPF0270 protein YheU (72 aa).

It belongs to the UPF0270 family.

This Salmonella arizonae (strain ATCC BAA-731 / CDC346-86 / RSK2980) protein is UPF0270 protein YheU.